The sequence spans 571 residues: Methionine--tRNA ligase (571 aa).

A 'HIGH' region motif is present at residues 10–20; it reads PYVNAVPHLGN. 4 residues coordinate Zn(2+): C143, C146, C156, and C159. Residues 333–337 carry the 'KMSKS' region motif; sequence KFSKS. An ATP-binding site is contributed by K336.

It belongs to the class-I aminoacyl-tRNA synthetase family. MetG type 1 subfamily. The cofactor is Zn(2+).

The protein localises to the cytoplasm. The catalysed reaction is tRNA(Met) + L-methionine + ATP = L-methionyl-tRNA(Met) + AMP + diphosphate. In terms of biological role, is required not only for elongation of protein synthesis but also for the initiation of all mRNA translation through initiator tRNA(fMet) aminoacylation. This chain is Methionine--tRNA ligase, found in Sulfurisphaera tokodaii (strain DSM 16993 / JCM 10545 / NBRC 100140 / 7) (Sulfolobus tokodaii).